The primary structure comprises 585 residues: Arginine--tRNA ligase (585 aa).

Positions 131-141 (ANPTGPMHVGH) match the 'HIGH' region motif.

The protein belongs to the class-I aminoacyl-tRNA synthetase family. In terms of assembly, monomer.

It localises to the cytoplasm. It carries out the reaction tRNA(Arg) + L-arginine + ATP = L-arginyl-tRNA(Arg) + AMP + diphosphate. In Bartonella henselae (strain ATCC 49882 / DSM 28221 / CCUG 30454 / Houston 1) (Rochalimaea henselae), this protein is Arginine--tRNA ligase.